We begin with the raw amino-acid sequence, 368 residues long: 1-deoxy-D-xylulose 5-phosphate reductoisomerase (368 aa).

Residues Thr-7, Gly-8, Ser-9, Ile-10, Gly-31, Lys-32, Asn-33, and Asn-113 each contribute to the NADPH site. Lys-114 contacts 1-deoxy-D-xylulose 5-phosphate. Glu-115 is an NADPH binding site. Asp-133 contacts Mn(2+). Residues Ser-134, Glu-135, Ser-158, and His-181 each coordinate 1-deoxy-D-xylulose 5-phosphate. Residue Glu-135 coordinates Mn(2+). Gly-187 is a binding site for NADPH. The 1-deoxy-D-xylulose 5-phosphate site is built by Ser-194, Asn-199, Lys-200, and Glu-203. Glu-203 is a Mn(2+) binding site.

It belongs to the DXR family. It depends on Mg(2+) as a cofactor. Mn(2+) is required as a cofactor.

The enzyme catalyses 2-C-methyl-D-erythritol 4-phosphate + NADP(+) = 1-deoxy-D-xylulose 5-phosphate + NADPH + H(+). It participates in isoprenoid biosynthesis; isopentenyl diphosphate biosynthesis via DXP pathway; isopentenyl diphosphate from 1-deoxy-D-xylulose 5-phosphate: step 1/6. Its function is as follows. Catalyzes the NADPH-dependent rearrangement and reduction of 1-deoxy-D-xylulose-5-phosphate (DXP) to 2-C-methyl-D-erythritol 4-phosphate (MEP). The protein is 1-deoxy-D-xylulose 5-phosphate reductoisomerase of Helicobacter pylori (strain ATCC 700392 / 26695) (Campylobacter pylori).